A 279-amino-acid chain; its full sequence is Movement protein (279 aa).

This sequence belongs to the cucumovirus movement protein family.

It is found in the host cell junction. It localises to the host plasmodesma. Its function is as follows. Transports viral genome to neighboring plant cells directly through plasmosdesmata, without any budding. The movement protein allows efficient cell to cell propagation, by bypassing the host cell wall barrier. Acts by forming a tubular structure at the host plasmodesmata, enlarging it enough to allow free passage of virion capsids. The polypeptide is Movement protein (Cucumber mosaic virus (strain As) (CMV)).